The primary structure comprises 319 residues: Transmembrane and ubiquitin-like domain-containing protein 2 (319 aa).

Residues 36-56 (VMVVAGVVALTLALVLAWLST) form a helical membrane-spanning segment. Disordered regions lie at residues 88–128 (VNQG…ARGE) and 145–165 (RQAGLGSSRPEAPLGLDDGSC). Residues 95–111 (PTEHPHPSGGNDDKAEE) are compositionally biased toward basic and acidic residues. Positions 173 to 246 (INVRLKFLND…IHCHRSPPGA (74 aa)) constitute a Ubiquitin-like domain. 2 helical membrane passes run 264–284 (LGVNVGSLMVPVFVVLLGVVW) and 298–318 (ATISLVGVTVFFSILVFGMYG).

The protein localises to the membrane. The sequence is that of Transmembrane and ubiquitin-like domain-containing protein 2 (Tmub2) from Mus musculus (Mouse).